The sequence spans 130 residues: Histone H2A type 2 (130 aa).

Residues 1 to 22 (MSGRGKQGGKTRAKSKTRSSRA) are disordered. Serine 2 is subject to N-acetylserine. The residue at position 2 (serine 2) is a Phosphoserine. Lysine 6 carries the N6-(2-hydroxyisobutyryl)lysine modification. Lysine 6 is subject to N6-acetyllysine. A compositionally biased stretch (basic residues) spans 7 to 19 (QGGKTRAKSKTRS). At lysine 10 the chain carries N6-(2-hydroxyisobutyryl)lysine; alternate. Lysine 10 carries the N6-lactoyllysine; alternate modification. Lysine 10 carries the N6-succinyllysine modification. Glycyl lysine isopeptide (Lys-Gly) (interchain with G-Cter in ubiquitin) cross-links involve residues lysine 14 and lysine 16. Lysine 37 is modified (N6-(2-hydroxyisobutyryl)lysine; alternate). Lysine 76 is subject to N6-(2-hydroxyisobutyryl)lysine. Position 96 is an N6-(2-hydroxyisobutyryl)lysine; alternate (lysine 96). Lysine 96 is modified (N6-succinyllysine). The residue at position 96 (lysine 96) is an N6-glutaryllysine; alternate. Glutamine 105 is subject to N5-methylglutamine. Lysine 119 carries the post-translational modification N6-(2-hydroxyisobutyryl)lysine; alternate. Lysine 119 carries the post-translational modification N6-glutaryllysine; alternate. Lysine 120 participates in a covalent cross-link: Glycyl lysine isopeptide (Lys-Gly) (interchain with G-Cter in ubiquitin).

The protein belongs to the histone H2A family. The nucleosome is a histone octamer containing two molecules each of H2A, H2B, H3 and H4 assembled in one H3-H4 heterotetramer and two H2A-H2B heterodimers. The octamer wraps approximately 147 bp of DNA. Post-translationally, monoubiquitination of Lys-120 (H2AK119Ub) gives a specific tag for epigenetic transcriptional repression. Following DNA double-strand breaks (DSBs), it is ubiquitinated through 'Lys-63' linkage of ubiquitin moieties, leading to the recruitment of repair proteins to sites of DNA damage. H2AK119Ub and ionizing radiation-induced 'Lys-63'-linked ubiquitination are distinct events. In terms of processing, phosphorylation on Ser-2 is enhanced during mitosis. Phosphorylation on Ser-2 directly represses transcription. Glutamine methylation at Gln-105 (H2AQ104me) by FBL is specifically dedicated to polymerase I. It is present at 35S ribosomal DNA locus and impairs binding of the FACT complex.

It is found in the nucleus. The protein resides in the chromosome. Core component of nucleosome. Nucleosomes wrap and compact DNA into chromatin, limiting DNA accessibility to the cellular machineries which require DNA as a template. Histones thereby play a central role in transcription regulation, DNA repair, DNA replication and chromosomal stability. DNA accessibility is regulated via a complex set of post-translational modifications of histones, also called histone code, and nucleosome remodeling. The polypeptide is Histone H2A type 2 (Xenopus laevis (African clawed frog)).